The sequence spans 554 residues: Asparagine synthetase B [glutamine-hydrolyzing] (554 aa).

Cysteine 2 (for GATase activity) is an active-site residue. A Glutamine amidotransferase type-2 domain is found at 2-186 (CSIFGVFDIK…AGSYLWSQDG (185 aa)). L-glutamine is bound by residues 50-54 (RLSIV), 75-77 (NGE), and aspartate 99. ATP contacts are provided by residues leucine 233, valine 273, and 347–348 (SG).

The protein belongs to the asparagine synthetase family. In terms of assembly, homodimer.

It catalyses the reaction L-aspartate + L-glutamine + ATP + H2O = L-asparagine + L-glutamate + AMP + diphosphate + H(+). Its pathway is amino-acid biosynthesis; L-asparagine biosynthesis; L-asparagine from L-aspartate (L-Gln route): step 1/1. With respect to regulation, glutamine-dependent asparagine synthesis activity can be inhibited by aspartic acid analogs (such as a sulfinate derivative and (2S,3R)-2-amino-3-methylsuccinate) in vitro; the inhibition is competitive with respect to aspartate. Catalyzes the ATP-dependent conversion of aspartate into asparagine, using glutamine as a source of nitrogen. Can also use ammonia as the nitrogen source in vitro, albeit with lower efficiency. As nucleotide substrates, ATP and dATP are utilized at a similar rate in both the glutamine- and ammonia-dependent reactions, whereas GTP utilization is only 15% that of ATP, and CTP, UTP, ITP and XTP are very poor or not substrates. Also exhibits glutaminase activity. In Escherichia coli (strain K12), this protein is Asparagine synthetase B [glutamine-hydrolyzing] (asnB).